The following is a 376-amino-acid chain: Succinyl-diaminopimelate desuccinylase (376 aa).

His-67 provides a ligand contact to Zn(2+). Asp-69 is a catalytic residue. A Zn(2+)-binding site is contributed by Asp-100. Catalysis depends on Glu-134, which acts as the Proton acceptor. Zn(2+)-binding residues include Glu-135, Glu-163, and His-349.

The protein belongs to the peptidase M20A family. DapE subfamily. In terms of assembly, homodimer. Zn(2+) serves as cofactor. The cofactor is Co(2+).

The catalysed reaction is N-succinyl-(2S,6S)-2,6-diaminopimelate + H2O = (2S,6S)-2,6-diaminopimelate + succinate. The protein operates within amino-acid biosynthesis; L-lysine biosynthesis via DAP pathway; LL-2,6-diaminopimelate from (S)-tetrahydrodipicolinate (succinylase route): step 3/3. Catalyzes the hydrolysis of N-succinyl-L,L-diaminopimelic acid (SDAP), forming succinate and LL-2,6-diaminopimelate (DAP), an intermediate involved in the bacterial biosynthesis of lysine and meso-diaminopimelic acid, an essential component of bacterial cell walls. The polypeptide is Succinyl-diaminopimelate desuccinylase (Shewanella woodyi (strain ATCC 51908 / MS32)).